The primary structure comprises 178 residues: NADH-quinone oxidoreductase subunit I (178 aa).

4Fe-4S ferredoxin-type domains lie at 45–74 (RHPD…VEAA) and 90–119 (KVYE…LGNE). [4Fe-4S] cluster-binding residues include cysteine 54, cysteine 57, cysteine 60, cysteine 64, cysteine 99, cysteine 102, cysteine 105, and cysteine 109.

The protein belongs to the complex I 23 kDa subunit family. NDH-1 is composed of 15 different subunits. Subunits NuoA, H, J, K, L, M, N constitute the membrane sector of the complex. [4Fe-4S] cluster is required as a cofactor.

Its subcellular location is the cell membrane. The catalysed reaction is a quinone + NADH + 5 H(+)(in) = a quinol + NAD(+) + 4 H(+)(out). In terms of biological role, NDH-1 shuttles electrons from NADH, via FMN and iron-sulfur (Fe-S) centers, to quinones in the respiratory chain. The immediate electron acceptor for the enzyme in this species is believed to be ubiquinone. Couples the redox reaction to proton translocation (for every two electrons transferred, four hydrogen ions are translocated across the cytoplasmic membrane), and thus conserves the redox energy in a proton gradient. This Deinococcus radiodurans (strain ATCC 13939 / DSM 20539 / JCM 16871 / CCUG 27074 / LMG 4051 / NBRC 15346 / NCIMB 9279 / VKM B-1422 / R1) protein is NADH-quinone oxidoreductase subunit I.